Consider the following 217-residue polypeptide: Large ribosomal subunit protein uL3 (217 aa).

Gln-152 is modified (N5-methylglutamine).

Belongs to the universal ribosomal protein uL3 family. In terms of assembly, part of the 50S ribosomal subunit. Forms a cluster with proteins L14 and L19. Post-translationally, methylated by PrmB.

In terms of biological role, one of the primary rRNA binding proteins, it binds directly near the 3'-end of the 23S rRNA, where it nucleates assembly of the 50S subunit. This is Large ribosomal subunit protein uL3 from Blochmanniella pennsylvanica (strain BPEN).